A 383-amino-acid polypeptide reads, in one-letter code: 8-amino-7-oxononanoate synthase (383 aa).

Arg21 is a substrate binding site. Residue 108–109 coordinates pyridoxal 5'-phosphate; the sequence is GF. Residue His133 coordinates substrate. Pyridoxal 5'-phosphate-binding residues include Ser179, His207, and Thr233. N6-(pyridoxal phosphate)lysine is present on Lys236. Residue Thr350 coordinates substrate.

The protein belongs to the class-II pyridoxal-phosphate-dependent aminotransferase family. BioF subfamily. Homodimer. It depends on pyridoxal 5'-phosphate as a cofactor.

The enzyme catalyses 6-carboxyhexanoyl-[ACP] + L-alanine + H(+) = (8S)-8-amino-7-oxononanoate + holo-[ACP] + CO2. It functions in the pathway cofactor biosynthesis; biotin biosynthesis. Its function is as follows. Catalyzes the decarboxylative condensation of pimeloyl-[acyl-carrier protein] and L-alanine to produce 8-amino-7-oxononanoate (AON), [acyl-carrier protein], and carbon dioxide. The polypeptide is 8-amino-7-oxononanoate synthase (Cronobacter sakazakii (strain ATCC BAA-894) (Enterobacter sakazakii)).